The chain runs to 440 residues: Ribosomal protein uS12 methylthiotransferase RimO (440 aa).

In terms of domain architecture, MTTase N-terminal spans 5-116; sequence PTIAISHLGC…IVSVIERAEQ (112 aa). Residues C14, C50, C79, C154, C158, and C161 each contribute to the [4Fe-4S] cluster site. One can recognise a Radical SAM core domain in the interval 140-370; it reads TTTEGVAYLR…ALQQPISWRK (231 aa). The TRAM domain maps to 372–438; that stretch reads QQEVGKTVEV…EYDLFGQVVS (67 aa).

It belongs to the methylthiotransferase family. RimO subfamily. It depends on [4Fe-4S] cluster as a cofactor.

The protein localises to the cytoplasm. The enzyme catalyses L-aspartate(89)-[ribosomal protein uS12]-hydrogen + (sulfur carrier)-SH + AH2 + 2 S-adenosyl-L-methionine = 3-methylsulfanyl-L-aspartate(89)-[ribosomal protein uS12]-hydrogen + (sulfur carrier)-H + 5'-deoxyadenosine + L-methionine + A + S-adenosyl-L-homocysteine + 2 H(+). Its function is as follows. Catalyzes the methylthiolation of an aspartic acid residue of ribosomal protein uS12. The sequence is that of Ribosomal protein uS12 methylthiotransferase RimO from Nostoc sp. (strain PCC 7120 / SAG 25.82 / UTEX 2576).